Reading from the N-terminus, the 290-residue chain is tRNA (guanine-N(7)-)-methyltransferase (290 aa).

2 stretches are compositionally biased toward basic and acidic residues: residues 1–12 and 20–43; these read MSDSLHTPEEPR and AHAHDGSLRHTRAKGEPRFPDGPK. The interval 1-49 is disordered; it reads MSDSLHTPEEPRPGPGEQLAHAHDGSLRHTRAKGEPRFPDGPKADPAGS. S-adenosyl-L-methionine-binding residues include E104, D129, D156, and D179. Residue D179 is part of the active site. Residues K183, D215, and 252–255 contribute to the substrate site; that span reads TRFE.

It belongs to the class I-like SAM-binding methyltransferase superfamily. TrmB family.

The catalysed reaction is guanosine(46) in tRNA + S-adenosyl-L-methionine = N(7)-methylguanosine(46) in tRNA + S-adenosyl-L-homocysteine. It functions in the pathway tRNA modification; N(7)-methylguanine-tRNA biosynthesis. Functionally, catalyzes the formation of N(7)-methylguanine at position 46 (m7G46) in tRNA. This chain is tRNA (guanine-N(7)-)-methyltransferase, found in Streptomyces avermitilis (strain ATCC 31267 / DSM 46492 / JCM 5070 / NBRC 14893 / NCIMB 12804 / NRRL 8165 / MA-4680).